The primary structure comprises 187 residues: Elongation factor P (187 aa).

The protein belongs to the elongation factor P family.

It localises to the cytoplasm. It functions in the pathway protein biosynthesis; polypeptide chain elongation. Its function is as follows. Involved in peptide bond synthesis. Stimulates efficient translation and peptide-bond synthesis on native or reconstituted 70S ribosomes in vitro. Probably functions indirectly by altering the affinity of the ribosome for aminoacyl-tRNA, thus increasing their reactivity as acceptors for peptidyl transferase. In Corynebacterium aurimucosum (strain ATCC 700975 / DSM 44827 / CIP 107346 / CN-1) (Corynebacterium nigricans), this protein is Elongation factor P.